The following is a 176-amino-acid chain: Immunity factor for TNT homolog (176 aa).

Interacts with the tuberculosis necrotizing toxin (TNT) homolog, the C-terminal domain of the outer membrane channel protein CpnT.

Functionally, antitoxin for tuberculosis necrotizing toxin (TNT) homolog. Acts by binding directly to TNT, which inhibits NAD(+) glycohydrolase activity of TNT and protects M.bovis from self-poisoning. The protein is Immunity factor for TNT homolog of Mycobacterium bovis (strain BCG / Pasteur 1173P2).